We begin with the raw amino-acid sequence, 295 residues long: MMRILLFLATNLAVVLIASITLSLFGFNGFMAANGVDLNLNQLLVFCAVFGFAGSLFSLFISKWMAKMSTSTQVITQPRTRHEQWLLQTVEQLSREAGIKMPEVGIFPAYEANAFATGWNKNDALVAVSQGMLERFSYDEVKAVLAHEIGHVANGDMVTLALVQGVVNTFVMFFARIIGNFVDKVIFKNEGGRGIAYFVATIFAEVVLGFLASAITMWFSRKREFRADEAGARLAGTGAMIAALQHLRSEQGLPVHMPDSLTAFGINGGIKQGMARLFMSHPPLEERIDALRRRG.

2 helical membrane-spanning segments follow: residues 4 to 24 (ILLF…TLSL) and 42 to 62 (QLLV…LFIS). Residue H147 coordinates Zn(2+). Residue E148 is part of the active site. Residue H151 coordinates Zn(2+). 2 helical membrane-spanning segments follow: residues 158-178 (VTLA…ARII) and 195-215 (IAYF…ASAI). E224 is a binding site for Zn(2+).

The protein belongs to the peptidase M48B family. Zn(2+) serves as cofactor.

The protein localises to the cell inner membrane. The sequence is that of Protease HtpX from Pseudomonas fluorescens (strain SBW25).